The following is a 186-amino-acid chain: Lipid A acyltransferase PagP (186 aa).

Residues 1 to 25 (MNVSKYVAIFSFVFIQLISVGKVFA) form the signal peptide. Catalysis depends on residues His58, Asp101, and Ser102.

It belongs to the lipid A palmitoyltransferase family. As to quaternary structure, homodimer.

It localises to the cell outer membrane. The enzyme catalyses a lipid A + a 1,2-diacyl-sn-glycero-3-phosphocholine = a hepta-acyl lipid A + a 2-acyl-sn-glycero-3-phosphocholine. The catalysed reaction is a lipid IVA + a 1,2-diacyl-sn-glycero-3-phosphocholine = a lipid IVB + a 2-acyl-sn-glycero-3-phosphocholine. It catalyses the reaction a lipid IIA + a 1,2-diacyl-sn-glycero-3-phosphocholine = a lipid IIB + a 2-acyl-sn-glycero-3-phosphocholine. In terms of biological role, transfers a fatty acid residue from the sn-1 position of a phospholipid to the N-linked hydroxyfatty acid chain on the proximal unit of lipid A or its precursors. The sequence is that of Lipid A acyltransferase PagP from Shigella flexneri serotype X (strain 2002017).